The primary structure comprises 728 residues: 1,4-alpha-glucan branching enzyme GlgB (728 aa).

D405 functions as the Nucleophile in the catalytic mechanism. E458 (proton donor) is an active-site residue.

It belongs to the glycosyl hydrolase 13 family. GlgB subfamily. Monomer.

It catalyses the reaction Transfers a segment of a (1-&gt;4)-alpha-D-glucan chain to a primary hydroxy group in a similar glucan chain.. Its pathway is glycan biosynthesis; glycogen biosynthesis. Its function is as follows. Catalyzes the formation of the alpha-1,6-glucosidic linkages in glycogen by scission of a 1,4-alpha-linked oligosaccharide from growing alpha-1,4-glucan chains and the subsequent attachment of the oligosaccharide to the alpha-1,6 position. This Citrobacter koseri (strain ATCC BAA-895 / CDC 4225-83 / SGSC4696) protein is 1,4-alpha-glucan branching enzyme GlgB.